We begin with the raw amino-acid sequence, 498 residues long: Glycerol kinase (498 aa).

Thr-12 serves as a coordination point for ADP. 3 residues coordinate ATP: Thr-12, Thr-13, and Ser-14. Thr-12 is a sn-glycerol 3-phosphate binding site. Arg-16 contacts ADP. Residues Arg-82, Glu-83, Tyr-134, and Asp-243 each contribute to the sn-glycerol 3-phosphate site. Glycerol is bound by residues Arg-82, Glu-83, Tyr-134, Asp-243, and Gln-244. ADP-binding residues include Thr-265 and Gly-308. Positions 265, 308, 312, and 411 each coordinate ATP. Gly-411 provides a ligand contact to ADP.

It belongs to the FGGY kinase family.

It carries out the reaction glycerol + ATP = sn-glycerol 3-phosphate + ADP + H(+). It functions in the pathway polyol metabolism; glycerol degradation via glycerol kinase pathway; sn-glycerol 3-phosphate from glycerol: step 1/1. With respect to regulation, inhibited by fructose 1,6-bisphosphate (FBP). Functionally, key enzyme in the regulation of glycerol uptake and metabolism. Catalyzes the phosphorylation of glycerol to yield sn-glycerol 3-phosphate. The sequence is that of Glycerol kinase from Brucella canis (strain ATCC 23365 / NCTC 10854 / RM-666).